We begin with the raw amino-acid sequence, 544 residues long: Protein adenylyltransferase (544 aa).

The Fido domain maps to 63 to 216 (FDTAYLCHIH…LEPMQHLFED (154 aa)). ATP-binding positions include 93 to 94 (FA), 106 to 107 (RT), 163 to 167 (EGNGR), and Arg-170.

It is found in the secreted. It catalyses the reaction L-tyrosyl-[protein] + ATP = O-(5'-adenylyl)-L-tyrosyl-[protein] + diphosphate. It carries out the reaction L-threonyl-[protein] + ATP = 3-O-(5'-adenylyl)-L-threonyl-[protein] + diphosphate. Functionally, adenylyltransferase involved in virulence by mediating the addition of adenosine 5'-monophosphate (AMP) to specific residue of host target proteins. The chain is Protein adenylyltransferase (bepA) from Bartonella henselae (strain ATCC 49882 / DSM 28221 / CCUG 30454 / Houston 1) (Rochalimaea henselae).